Here is a 304-residue protein sequence, read N- to C-terminus: tRNA uridine(34) hydroxylase (304 aa).

The Rhodanese domain maps to 124 to 219 (QDEETLLIDT…YLETIPKEDS (96 aa)). Cys-179 acts as the Cysteine persulfide intermediate in catalysis.

Belongs to the TrhO family.

It catalyses the reaction uridine(34) in tRNA + AH2 + O2 = 5-hydroxyuridine(34) in tRNA + A + H2O. In terms of biological role, catalyzes oxygen-dependent 5-hydroxyuridine (ho5U) modification at position 34 in tRNAs. In Bartonella henselae (strain ATCC 49882 / DSM 28221 / CCUG 30454 / Houston 1) (Rochalimaea henselae), this protein is tRNA uridine(34) hydroxylase.